The chain runs to 269 residues: Subtilisin Savinase (269 aa).

Ca(2+) is bound at residue glutamine 2. In terms of domain architecture, Peptidase S8 spans 5-268; it reads PWGISRVQAP…SGLVNAEAAT (264 aa). Aspartate 32 serves as the catalytic Charge relay system. A Ca(2+)-binding site is contributed by aspartate 40. Catalysis depends on histidine 62, which acts as the Charge relay system. Ca(2+) contacts are provided by leucine 73, asparagine 75, isoleucine 77, valine 79, alanine 163, tyrosine 165, and alanine 168. The active-site Charge relay system is serine 215.

It belongs to the peptidase S8 family. Requires Ca(2+) as cofactor.

It is found in the secreted. It carries out the reaction Hydrolysis of proteins with broad specificity for peptide bonds, and a preference for a large uncharged residue in P1. Hydrolyzes peptide amides.. In terms of biological role, subtilisin is an extracellular alkaline serine protease, it catalyzes the hydrolysis of proteins and peptide amides. In Lederbergia lenta (Bacillus lentus), this protein is Subtilisin Savinase.